Reading from the N-terminus, the 663-residue chain is Polyunsaturated fatty acid lipoxygenase ALOX15 (663 aa).

A PLAT domain is found at 2 to 115 (GLYRVRVSTG…ILSLPEGTGR (114 aa)). The Lipoxygenase domain occupies 116-663 (TVVDDPQGLF…PSLVENSVAI (548 aa)). The Fe cation site is built by histidine 361, histidine 366, histidine 541, histidine 545, and isoleucine 663.

It belongs to the lipoxygenase family. As to quaternary structure, interacts with PEBP1; in response to IL13/interleukin-13, prevents the interaction of PEBP1 with RAF1 to activate the ERK signaling cascade. It depends on Fe cation as a cofactor. As to expression, detected in tracheal epithelium.

Its subcellular location is the cytoplasm. It is found in the cytosol. The protein resides in the cell membrane. The protein localises to the lipid droplet. It catalyses the reaction (5Z,8Z,11Z,14Z)-eicosatetraenoate + O2 = (12S)-hydroperoxy-(5Z,8Z,10E,14Z)-eicosatetraenoate. It carries out the reaction (5Z,8Z,11Z,14Z)-eicosatetraenoate + O2 = (15S)-hydroperoxy-(5Z,8Z,11Z,13E)-eicosatetraenoate. The enzyme catalyses (9Z,12Z)-octadecadienoate + O2 = (13S)-hydroperoxy-(9Z,11E)-octadecadienoate. The catalysed reaction is (5Z,8Z,11Z,14Z)-eicosatetraenoate + 2 O2 = (14R,15S)-dihydroperoxy-(5Z,8Z,10E,12E)-eicosatetraenoate. It catalyses the reaction (5Z,8Z,11Z,14Z)-eicosatetraenoate + 2 O2 = (8S,15S)-dihydroperoxy-(5Z,9E,11Z,13E)-eicosatetraenoate. It carries out the reaction (14S,15R)-epoxy-(5Z,8Z,11Z)-eicosatrienoate + O2 = (8S)-hydroperoxy-(14S,15R)-epoxy-(5Z,9E,11Z)-eicosatrienoate. The enzyme catalyses (14S,15R)-epoxy-(5Z,8Z,11Z)-eicosatrienoate + O2 = (12S)-hydroperoxy-(14S,15R)-epoxy-(5Z,8Z,10E)-eicosatrienoate. The catalysed reaction is (14R,15S)-epoxy-(5Z,8Z,11Z)-eicosatrienoate + O2 = (5S)-hydroperoxy-(14R,15S)-epoxy-(6E,8Z,11Z)-eicosatrienoate. It catalyses the reaction (14R,15S)-epoxy-(5Z,8Z,11Z)-eicosatrienoate + O2 = (12S)-hydroperoxy-(14R,15S)-epoxy-(5Z,8Z,10E)-eicosatrienoate. It carries out the reaction (15R)-hydroperoxy-(5Z,8Z,11Z,13E)-eicosatetraenoate = 15-oxo-(5Z,8Z,11Z,13E)-eicosatetraenoate + H2O. The enzyme catalyses (15S)-hydroperoxy-(5Z,8Z,11Z,13E)-eicosatetraenoate = (14S,15S)-epoxy-(5Z,8Z,10E,12E)-eicosatetraenoate + H2O. The catalysed reaction is (12S)-hydroperoxy-(5Z,8Z,10E,14Z)-eicosatetraenoate = (8S)-hydroxy-(11S,12S)-epoxy-(5Z,9E,14Z)-eicosatrienoate. It catalyses the reaction (4Z,7Z,10Z,13Z,16Z)-docosapentaenoate + O2 = 14-hydroperoxy-(4Z,7Z,10Z,12E,16Z)-docosapentaenoate. It carries out the reaction (7Z,10Z,13Z,16Z,19Z)-docosapentaenoate + O2 = 14-hydroperoxy-(7Z,10Z,12E,16Z,19Z)-docosapentaenoate. The enzyme catalyses (4Z,7Z,10Z,13Z,16Z,19Z)-docosahexaenoate + O2 = (14S)-hydroperoxy-(4Z,7Z,10Z,12E,16Z,19Z)-docosahexaenoate. The catalysed reaction is (4Z,7Z,10Z,13Z,16Z,19Z)-docosahexaenoate + O2 = (17S)-hydroperoxy-(4Z,7Z,10Z,13Z,15E,19Z)-docosahexaenoate. It catalyses the reaction (7S)-hydroperoxy-(4Z,8E,10Z,13Z,16Z,19Z)-docosahexaenoate + O2 = (7S,14S)-dihydroperoxy-(4Z,8E,10Z,12E,16Z,19Z)-docosahexaenoate. It carries out the reaction (7S)-hydroperoxy-(4Z,8E,10Z,13Z,16Z,19Z)-docosahexaenoate + O2 = (7S,17S)-dihydroperoxy-(4Z,8E,10Z,13Z,15E,19Z)-docosahexaenoate. The enzyme catalyses (4Z,7Z,10Z,13Z,16Z,19Z)-docosahexaenoate + O2 = (11S)-hydroperoxy-(4Z,7Z,9E,13Z,16Z,19Z)-docosahexaenoate. The catalysed reaction is N-(5Z,8Z,11Z,14Z)-eicosatetraenoyl-taurine + O2 = N-(12S)-hydroperoxy-(5Z,8Z,10E,14Z)-eicosatetraenoyl-taurine. It catalyses the reaction N-(5Z,8Z,11Z,14Z)-eicosatetraenoyl-gamma-aminobutanoate + O2 = N-(12S)-hydroperoxy-(5Z,8Z,10E,14Z)-eicosatetraenoyl-gamma-aminobutanoate. It carries out the reaction N-(5Z,8Z,11Z,14Z)-eicosatetraenoyl-glycine + O2 = N-(12S)-hydroperoxy-(5Z,8Z,10E,14Z)-eicosatetraenoyl-glycine. The enzyme catalyses N-(5Z,8Z,11Z,14Z)-eicosatetraenoyl-L-alanine + O2 = N-(12S)-hydroperoxy-(5Z,8Z,10E,14Z)-eicosatetraenoyl-alanine. The catalysed reaction is N-(5Z,8Z,11Z,14Z)-eicosatetraenoyl-taurine + O2 = N-(15S)-hydroperoxy-(5Z,8Z,11Z,13E)-eicosatetraenoyl-taurine. It catalyses the reaction N-(5Z,8Z,11Z,14Z)-eicosatetraenoyl-gamma-aminobutanoate + O2 = N-(15S)-hydroperoxy-(5Z,8Z,11Z,13E)-eicosatetraenoyl-gamma-aminobutanoate. It carries out the reaction N-(5Z,8Z,11Z,14Z)-eicosatetraenoyl-glycine + O2 = N-(15S)-hydroperoxy-(5Z,8Z,11Z,13E)-eicosatetraenoyl-glycine. The enzyme catalyses N-(5Z,8Z,11Z,14Z)-eicosatetraenoyl-L-alanine + O2 = N-(15S)-hydroperoxy-(5Z,8Z,11Z,13E)-eicosatetraenoyl-alanine. The protein operates within lipid metabolism; hydroperoxy eicosatetraenoic acid biosynthesis. Non-heme iron-containing dioxygenase that catalyzes the stereo-specific peroxidation of free and esterified polyunsaturated fatty acids generating a spectrum of bioactive lipid mediators. It inserts peroxyl groups at C12 or C15 of arachidonate ((5Z,8Z,11Z,14Z)-eicosatetraenoate) producing both 12-hydroperoxyeicosatetraenoate/12-HPETE and 15-hydroperoxyeicosatetraenoate/15-HPETE. It may then act on 12-HPETE to produce hepoxilins, which may show pro-inflammatory properties. Can also peroxidize linoleate ((9Z,12Z)-octadecadienoate) to 13-hydroperoxyoctadecadienoate. May participate in the sequential oxidations of DHA ((4Z,7Z,10Z,13Z,16Z,19Z)-docosahexaenoate) to generate specialized pro-resolving mediators (SPMs)like resolvin D5 ((7S,17S)-diHPDHA) and (7S,14S)-diHPDHA, that actively down-regulate the immune response and have anti-aggregation properties with platelets. Can convert epoxy fatty acids to hydroperoxy-epoxides derivatives followed by an intramolecular nucleophilic substitution leading to the formation of monocyclic endoperoxides. Plays an important role during the maintenance of self-tolerance by peroxidizing membrane-bound phosphatidylethanolamine which can then signal the sorting process for clearance of apoptotic cells during inflammation and prevent an autoimmune response. In addition to its role in the immune and inflammatory responses, this enzyme may play a role in epithelial wound healing in the cornea through production of lipoxin A4 (LXA(4)) and docosahexaenoic acid-derived neuroprotectin D1 (NPD1; 10R,17S-HDHA), both lipid autacoids exhibit anti-inflammatory and neuroprotective properties. Furthermore, it may regulate actin polymerization which is crucial for several biological processes such as the phagocytosis of apoptotic cells. It is also implicated in the generation of endogenous ligands for peroxisome proliferator activated receptor (PPAR-gamma), hence modulating macrophage development and function. It may also exert a negative effect on skeletal development by regulating bone mass through this pathway. As well as participates in ER stress and downstream inflammation in adipocytes, pancreatic islets, and liver. Finally, it is also involved in the cellular response to IL13/interleukin-13. In Bos taurus (Bovine), this protein is Polyunsaturated fatty acid lipoxygenase ALOX15.